We begin with the raw amino-acid sequence, 342 residues long: MRAFLDLNSEEIVAWLKENNEKSFRLKQINEWIFKHGELDFNKMTNLPVRLREKLKENFLLPSLKIIHSKKSRDGQSIKYLLKLKDNLGIEAVLLKYRYGNTVCLSTQVGCKMGCKFCATGLGGFSRNLTAGEMIEQILVLKASSSEKITRVVLMGSGEPLDNFTEVLKFMRKINEKDCLNISYRKITVSTCGMVPQIKALAEEKLPVTLAISLHAPDDALRNELIPINKRWGLAELLDAAWYFIDKTGRRVSFEYALIENVNDTVEHALKLAQLLQRKLVHVNLIPYNTIEKRNFKTPSVEKINKFKEVLKRAGIPVTVRRELGDEIDGACGQLKAKYFEV.

The active-site Proton acceptor is the Glu-91. Residues 97–327 form the Radical SAM core domain; the sequence is YRYGNTVCLS…VTVRRELGDE (231 aa). A disulfide bridge links Cys-104 with Cys-332. [4Fe-4S] cluster is bound by residues Cys-111, Cys-115, and Cys-118. S-adenosyl-L-methionine contacts are provided by residues 158–159, Ser-190, 213–215, and Asn-289; these read GE and SLH. Cys-332 functions as the S-methylcysteine intermediate in the catalytic mechanism.

Belongs to the radical SAM superfamily. RlmN family. [4Fe-4S] cluster serves as cofactor.

Its subcellular location is the cytoplasm. It carries out the reaction adenosine(2503) in 23S rRNA + 2 reduced [2Fe-2S]-[ferredoxin] + 2 S-adenosyl-L-methionine = 2-methyladenosine(2503) in 23S rRNA + 5'-deoxyadenosine + L-methionine + 2 oxidized [2Fe-2S]-[ferredoxin] + S-adenosyl-L-homocysteine. It catalyses the reaction adenosine(37) in tRNA + 2 reduced [2Fe-2S]-[ferredoxin] + 2 S-adenosyl-L-methionine = 2-methyladenosine(37) in tRNA + 5'-deoxyadenosine + L-methionine + 2 oxidized [2Fe-2S]-[ferredoxin] + S-adenosyl-L-homocysteine. Functionally, specifically methylates position 2 of adenine 2503 in 23S rRNA and position 2 of adenine 37 in tRNAs. The chain is Probable dual-specificity RNA methyltransferase RlmN from Carboxydothermus hydrogenoformans (strain ATCC BAA-161 / DSM 6008 / Z-2901).